The chain runs to 183 residues: Ras-related protein Rap-2a (183 aa).

10 to 17 (GSGGVGKS) is a GTP binding site. Residues 32-40 (YDPTIEDFY) carry the Effector region motif. The (Microbial infection) O-linked (Glc) threonine; by C.difficile toxin TcdA, and by P.sordellii toxin TcsL glycan is linked to Thr35. GTP is bound by residues 57–61 (DTAGT) and 116–119 (NKVD). Residues Cys176 and Cys177 are each lipidated (S-palmitoyl cysteine). Cys180 bears the Cysteine methyl ester mark. A lipid anchor (S-farnesyl cysteine) is attached at Cys180. The propeptide at 181-183 (NIQ) is removed in mature form.

It belongs to the small GTPase superfamily. Ras family. Interacts (GTP-bound form) with RUNDC3A. Interacts with RGS14; the interaction is GTP-dependent. Interacts with PLCE1. Interacts with ARHGAP29, SGSM1, SGSM2 and SGSM3. Interacts (GTP-bound form preferentially) with TNIK (via the CNH domain); the interaction is direct and recruits RAP2A to the E3 ubiquitin ligase NEDD4. Interacts with MINK1. Interacts (GTP-bound form preferentially) with MAP4K4. Interacts with cytoskeletal actin. Ubiquitinated; undergoes 'Lys-63' monoubiquitination and diubiquitination by NEDD4. Multiple lysine residues are probably modified. Ubiquitination requires TNIK, prevents interaction with effectors and inactivates RAP2A. Ubiquitination by the ECS(RAB40B) complex leads to RAP2A localization to lamellipodia plasma membrane, activation, and regulation of sorting at early endosomes for recycling to the lamellipodia plasma membrane. Post-translationally, palmitoylated. Palmitoylation is required for association with recycling endosome membranes and activation of TNIK. In terms of processing, (Microbial infection) Glucosylated at Thr-35 by C.difficile toxin TcdA in the colonic epithelium, and by P.sordellii toxin TcsL in the vascular endothelium.

The protein localises to the midbody. It localises to the cell projection. The protein resides in the lamellipodium membrane. It is found in the golgi apparatus. Its subcellular location is the recycling endosome membrane. The protein localises to the lysosome. It catalyses the reaction GTP + H2O = GDP + phosphate + H(+). With respect to regulation, activated by the guanine nucleotide-exchange factors RAPGEF3 and RAPGEF4 in a cAMP-dependent manner. Nucleotide exchange is also specifically stimulated by RAPGEF5, RASGEF1A and RASGEF1B. Functionally, small GTP-binding protein which cycles between a GDP-bound inactive and a GTP-bound active form. In its active form interacts with and regulates several effectors including MAP4K4, MINK1 and TNIK. Part of a signaling complex composed of NEDD4, RAP2A and TNIK which regulates neuronal dendrite extension and arborization during development. More generally, it is part of several signaling cascades and regulates cytoskeletal rearrangements, cell migration, cell adhesion and cell spreading. The protein is Ras-related protein Rap-2a of Homo sapiens (Human).